The following is a 388-amino-acid chain: Norsolorinic acid reductase (388 aa).

The active-site Proton donor is the Tyr-74. Residue 233–243 (GVLGRGQFRSA) coordinates NADP(+).

Belongs to the aldo/keto reductase family. Aldo/keto reductase 2 subfamily.

It functions in the pathway mycotoxin biosynthesis; aflatoxin biosynthesis. This chain is Norsolorinic acid reductase (norA), found in Aspergillus flavus (strain ATCC 200026 / FGSC A1120 / IAM 13836 / NRRL 3357 / JCM 12722 / SRRC 167).